Here is a 465-residue protein sequence, read N- to C-terminus: Lysosomal dipeptide transporter MFSD1 (465 aa).

Residues 1 to 23 (MEEEDEEARALLAGGPDEADRGA) are disordered. Positions 11–12 (LL) match the Dileucine internalization motif motif. Transmembrane regions (helical) follow at residues 39 to 59 (LAHR…SYFC), 83 to 103 (LLYA…GFLI), 113 to 133 (TIIF…GGIF), 135 to 155 (AFWL…SLAV), 170 to 191 (LNLV…NMNL), 213 to 233 (ITLM…LALA), 266 to 286 (LWLI…FIGL), 303 to 323 (SAIN…FGLL), 331 to 351 (IIWV…LAFT), 361 to 381 (LLGL…AFVV), 392 to 412 (FMQS…GMIL), and 418 to 438 (LFLE…VVLL).

Belongs to the major facilitator superfamily. In terms of assembly, homodimer. Interacts with lysosomal protein GLMP (via lumenal domain); the interaction starts while both proteins are still in the endoplasmic reticulum and is required for stabilization of MFSD1 in lysosomes but has no direct effect on its targeting to lysosomes or transporter activity.

The protein localises to the lysosome membrane. The catalysed reaction is L-alpha-aminoacyl-L-arginine(out) = L-alpha-aminoacyl-L-arginine(in). It catalyses the reaction L-arginyl-L-alpha-amino acid(out) = L-arginyl-L-alpha-amino acid(in). The enzyme catalyses L-arginyl-glycine(out) = L-arginyl-glycine(in). It carries out the reaction L-alpha-aminoacyl-L-lysine(out) = L-alpha-aminoacyl-L-lysine(in). The catalysed reaction is L-aspartyl-L-lysine(out) = L-aspartyl-L-lysine(in). It catalyses the reaction L-alanyl-L-lysine(out) = L-alanyl-L-lysine(in). The enzyme catalyses L-lysyl-L-alpha-amino acid(out) = L-lysyl-L-alpha-amino acid(in). It carries out the reaction L-lysyl-L-alanine(out) = L-lysyl-L-alanine(in). The catalysed reaction is L-lysyl-L-lysine(out) = L-lysyl-L-lysine(in). It catalyses the reaction L-lysyl-glycine(out) = L-lysyl-glycine(in). The enzyme catalyses L-alpha-aminoacyl-L-histidine(out) = L-alpha-aminoacyl-L-histidine(in). It carries out the reaction L-histidyl-L-alpha-amino acid(out) = L-histidyl-L-alpha-amino acid(in). The catalysed reaction is L-histidyl-glycine(out) = L-histidyl-glycine(in). In terms of biological role, lysosomal dipeptide uniporter that selectively exports lysine, arginine or histidine-containing dipeptides with a net positive charge from the lysosome lumen into the cytosol. Could play a role in a specific type of protein O-glycosylation indirectly regulating macrophages migration and tissue invasion. Also essential for liver homeostasis. This is Lysosomal dipeptide transporter MFSD1 from Homo sapiens (Human).